The primary structure comprises 201 residues: Adenylyl-sulfate kinase (201 aa).

35-42 (GLSGSGKS) provides a ligand contact to ATP. Ser109 functions as the Phosphoserine intermediate in the catalytic mechanism.

It belongs to the APS kinase family.

It carries out the reaction adenosine 5'-phosphosulfate + ATP = 3'-phosphoadenylyl sulfate + ADP + H(+). Its pathway is sulfur metabolism; hydrogen sulfide biosynthesis; sulfite from sulfate: step 2/3. In terms of biological role, catalyzes the synthesis of activated sulfate. The polypeptide is Adenylyl-sulfate kinase (Escherichia coli (strain ATCC 8739 / DSM 1576 / NBRC 3972 / NCIMB 8545 / WDCM 00012 / Crooks)).